A 462-amino-acid chain; its full sequence is Probable DNA-directed RNA polymerase subunit 343L (462 aa).

It belongs to the RNA polymerase beta' chain family.

The catalysed reaction is RNA(n) + a ribonucleoside 5'-triphosphate = RNA(n+1) + diphosphate. Functionally, component of the DNA-dependent RNA polymerase that catalyzes the transcription in the cytoplasm of viral DNA into RNA using the four ribonucleoside triphosphates as substrates. The sequence is that of Probable DNA-directed RNA polymerase subunit 343L from Acheta domesticus (House cricket).